The following is a 329-amino-acid chain: Peroxidase 17 (329 aa).

An N-terminal signal peptide occupies residues 1–19; the sequence is MSLLPHLILYLTLLTVVVT. 4 cysteine pairs are disulfide-bonded: C32/C112, C65/C70, C118/C315, and C197/C229. The active-site Proton acceptor is H63. The Ca(2+) site is built by D64, V67, G69, D71, and S73. Residue P160 coordinates substrate. Residues N165 and N177 are each glycosylated (N-linked (GlcNAc...) asparagine). Residue H190 coordinates heme b. S191 serves as a coordination point for Ca(2+). N206 and N236 each carry an N-linked (GlcNAc...) asparagine glycan. Residues D242, T244, and D249 each coordinate Ca(2+).

The protein belongs to the peroxidase family. Classical plant (class III) peroxidase subfamily. Requires heme b as cofactor. It depends on Ca(2+) as a cofactor.

It is found in the secreted. The protein resides in the vacuole. The catalysed reaction is 2 a phenolic donor + H2O2 = 2 a phenolic radical donor + 2 H2O. In terms of biological role, removal of H(2)O(2), oxidation of toxic reductants, biosynthesis and degradation of lignin, suberization, auxin catabolism, response to environmental stresses such as wounding, pathogen attack and oxidative stress. These functions might be dependent on each isozyme/isoform in each plant tissue. This chain is Peroxidase 17 (PER17), found in Arabidopsis thaliana (Mouse-ear cress).